A 371-amino-acid chain; its full sequence is Ligninase LG2 (371 aa).

The signal sequence occupies residues 1–21 (MAFKQLFAAITVALSLTAANA). Positions 22-28 (AVVKEKR) are excised as a propeptide. Disulfide bonds link C31-C43, C42-C313, C62-C148, and C277-C345. The active-site Proton acceptor is H75. Ca(2+) is bound by residues D76, G94, D96, and S98. At W199 the chain carries 3-hydroxytryptophan. Residue H204 participates in heme b binding. S205, D222, T224, I227, and D229 together coordinate Ca(2+). N-linked (GlcNAc...) asparagine glycosylation occurs at N285.

The protein belongs to the peroxidase family. Ligninase subfamily. Ca(2+) serves as cofactor. Heme b is required as a cofactor.

It catalyses the reaction 1-(3,4-dimethoxyphenyl)-2-(2-methoxyphenoxy)propane-1,3-diol + H2O2 = 3,4-dimethoxybenzaldehyde + guaiacol + glycolaldehyde + H2O. The catalysed reaction is 2 (3,4-dimethoxyphenyl)methanol + H2O2 = 2 (3,4-dimethoxyphenyl)methanol radical + 2 H2O. It participates in secondary metabolite metabolism; lignin degradation. Its function is as follows. Depolymerization of lignin. Catalyzes the C(alpha)-C(beta) cleavage of the propyl side chains of lignin. The polypeptide is Ligninase LG2 (GLG2) (Phanerodontia chrysosporium (White-rot fungus)).